Consider the following 430-residue polypeptide: tRNA(Ile)-lysidine synthase (430 aa).

24-29 (SGGLDS) provides a ligand contact to ATP.

Belongs to the tRNA(Ile)-lysidine synthase family.

The protein resides in the cytoplasm. The enzyme catalyses cytidine(34) in tRNA(Ile2) + L-lysine + ATP = lysidine(34) in tRNA(Ile2) + AMP + diphosphate + H(+). Functionally, ligates lysine onto the cytidine present at position 34 of the AUA codon-specific tRNA(Ile) that contains the anticodon CAU, in an ATP-dependent manner. Cytidine is converted to lysidine, thus changing the amino acid specificity of the tRNA from methionine to isoleucine. The protein is tRNA(Ile)-lysidine synthase of Haemophilus influenzae (strain PittEE).